A 2742-amino-acid chain; its full sequence is Neurobeachin-like protein 2 (2742 aa).

2 disordered regions span residues 1312–1333 (ALSP…PSES) and 1356–1434 (LERA…QQTP). Positions 1384 to 1394 (TPSPLDGPRPF) are enriched in pro residues. Residues 1421-1433 (GDDTSNTSNPQQT) are compositionally biased toward polar residues. Threonine 1855 carries the phosphothreonine modification. Residues 1903–2028 (EKREKLVLSA…LRNQVYSLLL (126 aa)) enclose the BEACH-type PH domain. A BEACH domain is found at 2041 to 2333 (RSPLEMLRAS…QLLKEPHPPR (293 aa)). WD repeat units lie at residues 2374–2412 (LVLA…TWLP), 2436–2479 (KLLS…SLPR), 2482–2519 (LLNQ…VWRL), 2532–2570 (KPVQ…IHTV), 2577–2619 (AALR…TYSL), 2627–2662 (RLRA…ILHL), and 2670–2705 (PPLP…VGAG). 2 positions are modified to phosphoserine: serine 2727 and serine 2730.

This sequence belongs to the WD repeat neurobeachin family.

It is found in the endoplasmic reticulum. Functionally, probably involved in thrombopoiesis. Plays a role in the development or secretion of alpha-granules, that contain several growth factors important for platelet biogenesis. The protein is Neurobeachin-like protein 2 (Nbeal2) of Mus musculus (Mouse).